The chain runs to 460 residues: NADH-ubiquinone oxidoreductase chain 4 (460 aa).

The next 13 membrane-spanning stretches (helical) occupy residues 22-42 (WLWS…LSWF), 59-79 (IDPL…LMIL), 94-113 (RIYI…AFSA), 117-139 (ILFY…RWGN), 148-168 (TYFL…LLFM), 195-215 (FWWT…GVHL), 231-251 (ILAA…IIML), 258-278 (MAYP…SICL), 286-306 (MIAY…LIQT), 310-330 (FAGA…LFCL), 343-362 (LLLA…WWLL), 394-414 (ILLT…MFLM), and 436-456 (LLLT…ELIW).

The protein belongs to the complex I subunit 4 family.

Its subcellular location is the mitochondrion membrane. It catalyses the reaction a ubiquinone + NADH + 5 H(+)(in) = a ubiquinol + NAD(+) + 4 H(+)(out). In terms of biological role, core subunit of the mitochondrial membrane respiratory chain NADH dehydrogenase (Complex I) that is believed to belong to the minimal assembly required for catalysis. Complex I functions in the transfer of electrons from NADH to the respiratory chain. The immediate electron acceptor for the enzyme is believed to be ubiquinone. This chain is NADH-ubiquinone oxidoreductase chain 4 (MTND4), found in Scyliorhinus canicula (Small-spotted catshark).